The sequence spans 88 residues: MKYMIITVVILFTCALKMFCEETEEENHLAIPEDPYPSLPLRNYSCNNMACPLKHICGCMPTPITPETPFRDLDCGCYHEFDMMPVCV.

The N-terminal stretch at 1 to 20 (MKYMIITVVILFTCALKMFC) is a signal peptide.

The protein belongs to the scoloptoxin-12 family. Post-translationally, contains 3 disulfide bonds. As to expression, expressed by the venom gland.

It localises to the secreted. This Scolopendra alternans (Florida Keys giant centipede) protein is U-scoloptoxin(12)-Sa1a.